A 965-amino-acid polypeptide reads, in one-letter code: Glycine dehydrogenase (decarboxylating) (965 aa).

At Lys-711 the chain carries N6-(pyridoxal phosphate)lysine.

Belongs to the GcvP family. As to quaternary structure, the glycine cleavage system is composed of four proteins: P, T, L and H. Requires pyridoxal 5'-phosphate as cofactor.

The catalysed reaction is N(6)-[(R)-lipoyl]-L-lysyl-[glycine-cleavage complex H protein] + glycine + H(+) = N(6)-[(R)-S(8)-aminomethyldihydrolipoyl]-L-lysyl-[glycine-cleavage complex H protein] + CO2. Its function is as follows. The glycine cleavage system catalyzes the degradation of glycine. The P protein binds the alpha-amino group of glycine through its pyridoxal phosphate cofactor; CO(2) is released and the remaining methylamine moiety is then transferred to the lipoamide cofactor of the H protein. In Psychrobacter cryohalolentis (strain ATCC BAA-1226 / DSM 17306 / VKM B-2378 / K5), this protein is Glycine dehydrogenase (decarboxylating).